We begin with the raw amino-acid sequence, 1569 residues long: MAEAKKPGPERISILGEANIIVDHGLWLNFVVDDLLQNTPTSTYVLITDTNLFDTYVPAFQAQFEAAAEGKATRLLTYTIPPGEASKSRETKAEIEDWMLSQQCTRDTVIIALGGGVMGDMIGYVAATFMRGVRFVQVPTTLLAMVDSSIGGKTAIDTPMGKNLVGAFWQPKRIYIDLAFLETLPVREFINGMAEVVKTAAIWNETEFTVLEESAAHILECVRSKGEGRLTPIKDVLKRIVIGSAGVKAEVVSSDEREGGLRNLLNFGHSIGHAIEAILTPQLLHGEAVAIGMVKEAELARYLGVLRPGAVARLVKCIASYDLPTSIHDKRVVKLTAGKKCPVDVLLQKMGVDKKNDGQKKKIVLLSAIGKCHEPRASVVDDKTIRTILSPSIQVTPGVPSNLDVTVTPPGSKSISNRALVLAALGLGSCRIKNLLHSDDTEYMLSAIHQLGGASYSWQDAGEVLVVDGKGGNLQASKEALYLGNAGTASRFLTTVVALCSPSESASSTILTGNARMKVRPIGPLVDALRSNGVEIEYQGKENSLPLRVDAAGGLKGGVIELAATVSSQYVSSILMAAPYAKNPVTLRLVGGKPISQPYIDMTISMMASFGVHVTASSDEPNTYHIPQGQYQNPSEYIIESDASSATYPLAIAAITGTTCTIPNIGSKSLQGDARFAVDVLQPMGCTVNQSDYSTTVTGPAPGELKGLPHVDMEPMTDAFLTASVLAAVASGKTQITGIANQRVKECNRIAAMKDQLAKFGVQCNELDDGIEVLGKGQDGGISAPTVGIHCYDDHRVAMSFSVLAVASPSPVIVTERECVGKTWPGWWDILSQAFKVDMIGHEPDANADEEDSKSSVMERSVFIIGMRGAGKTTAGNWMAKMLGWKFIDLDQELERRAGCTIPEMIRGSRGWEGFRADELSLLKDVMAKNSHGHIFSCGGGLVETPEARQLLKDYGRNGGNVLLIHRDTEQVVEYLMRDKTRPAYTSEIREVYLRRKDFYQECSNLLYYSPHSESSGSKSEIPCDFQQFVSSISGRSTHLKDVMEKDHSFFVSLTVPDVSEAASLIPEVVVGSDAVELRVDLLQDRSVDSVTRQVSILRALAKKPIVFTLRTVSQGGKFPDEAYEEGLELYRLALRMGMEYVDVEMTLPENIIQTVTESRGHSRIIASHHDPQGTMSWKNASWIPFYNRALQFGDIIKLVGVARSSEDNFDLAKFKSRMQEAQKTPMIAMNMGKAGKLSRVLNKFLTPVSHPALPFKAAPGQMSAAEIRRGLALLGDLDPCNFYLFGKPISASRSPALHNTLFGQTGLPHQYHRLETDNIQDVREVLQAPDFGGASVTIPLKLDVMGQVDELSEAARTIGAVNTVVPIGKADASDRRRLLGDNTDWRGMVHALRDEGVEEQADSETKGAAMVVGSGGTTRAAIFALHSLGFGPIYIAARNQAKVDALAADFPAEYQLQGLSQPSDADKVSSNLNVVISTIPADRPIDPSLQELVGALLSRPAVGTERRVLLEMAYKPSHTPIMQLADEAGNWTTVPGLEVLASQGWYQFELWTGITPLYRDARSAVLGL.

Residues 1–382 (MAEAKKPGPE…HEPRASVVDD (382 aa)) are 3-dehydroquinate synthase. NAD(+)-binding positions include 49–51 (DTN), 84–87 (EASK), 115–117 (GGV), and Asp-120. Arg-131 is a binding site for 7-phospho-2-dehydro-3-deoxy-D-arabino-heptonate. 140–141 (TT) lines the NAD(+) pocket. Residues Asp-147 and Lys-153 each coordinate 7-phospho-2-dehydro-3-deoxy-D-arabino-heptonate. Lys-162 contacts NAD(+). Asn-163 contacts 7-phospho-2-dehydro-3-deoxy-D-arabino-heptonate. Residues 180–183 (FLET) and Asn-191 each bind NAD(+). Glu-195 lines the Zn(2+) pocket. Residues 195-198 (EVVK) and Lys-248 each bind 7-phospho-2-dehydro-3-deoxy-D-arabino-heptonate. The Proton acceptor; for 3-dehydroquinate synthase activity role is filled by Glu-258. 7-phospho-2-dehydro-3-deoxy-D-arabino-heptonate is bound by residues 262-266 (RNLLN) and His-269. His-269 lines the Zn(2+) pocket. His-273 serves as the catalytic Proton acceptor; for 3-dehydroquinate synthase activity. His-285 and Lys-354 together coordinate 7-phospho-2-dehydro-3-deoxy-D-arabino-heptonate. Residue His-285 participates in Zn(2+) binding. The tract at residues 395 to 837 (VTPGVPSNLD…WDILSQAFKV (443 aa)) is EPSP synthase. Cys-819 serves as the catalytic For EPSP synthase activity. The tract at residues 859–1053 (ERSVFIIGMR…MEKDHSFFVS (195 aa)) is shikimate kinase. An ATP-binding site is contributed by 866-873 (GMRGAGKT). The tract at residues 1054 to 1267 (LTVPDVSEAA…AAPGQMSAAE (214 aa)) is 3-dehydroquinase. His-1170 functions as the Proton acceptor; for 3-dehydroquinate dehydratase activity in the catalytic mechanism. Lys-1198 (schiff-base intermediate with substrate; for 3-dehydroquinate dehydratase activity) is an active-site residue. The tract at residues 1280 to 1569 (PCNFYLFGKP…RDARSAVLGL (290 aa)) is shikimate dehydrogenase.

It in the N-terminal section; belongs to the sugar phosphate cyclases superfamily. Dehydroquinate synthase family. In the 2nd section; belongs to the EPSP synthase family. This sequence in the 3rd section; belongs to the shikimate kinase family. The protein in the 4th section; belongs to the type-I 3-dehydroquinase family. It in the C-terminal section; belongs to the shikimate dehydrogenase family. In terms of assembly, homodimer. Zn(2+) is required as a cofactor.

Its subcellular location is the cytoplasm. It carries out the reaction 7-phospho-2-dehydro-3-deoxy-D-arabino-heptonate = 3-dehydroquinate + phosphate. The enzyme catalyses 3-dehydroquinate = 3-dehydroshikimate + H2O. The catalysed reaction is shikimate + NADP(+) = 3-dehydroshikimate + NADPH + H(+). It catalyses the reaction shikimate + ATP = 3-phosphoshikimate + ADP + H(+). It carries out the reaction 3-phosphoshikimate + phosphoenolpyruvate = 5-O-(1-carboxyvinyl)-3-phosphoshikimate + phosphate. It participates in metabolic intermediate biosynthesis; chorismate biosynthesis; chorismate from D-erythrose 4-phosphate and phosphoenolpyruvate: step 2/7. The protein operates within metabolic intermediate biosynthesis; chorismate biosynthesis; chorismate from D-erythrose 4-phosphate and phosphoenolpyruvate: step 3/7. Its pathway is metabolic intermediate biosynthesis; chorismate biosynthesis; chorismate from D-erythrose 4-phosphate and phosphoenolpyruvate: step 4/7. It functions in the pathway metabolic intermediate biosynthesis; chorismate biosynthesis; chorismate from D-erythrose 4-phosphate and phosphoenolpyruvate: step 5/7. It participates in metabolic intermediate biosynthesis; chorismate biosynthesis; chorismate from D-erythrose 4-phosphate and phosphoenolpyruvate: step 6/7. The AROM polypeptide catalyzes 5 consecutive enzymatic reactions in prechorismate polyaromatic amino acid biosynthesis. The protein is Pentafunctional AROM polypeptide of Fusarium vanettenii (strain ATCC MYA-4622 / CBS 123669 / FGSC 9596 / NRRL 45880 / 77-13-4) (Fusarium solani subsp. pisi).